A 138-amino-acid polypeptide reads, in one-letter code: Proofreading thioesterase EntH (138 aa).

Glu64 functions as the Nucleophile or proton acceptor in the catalytic mechanism.

The protein belongs to the thioesterase PaaI family. As to quaternary structure, homotetramer. Dimer of dimers. Interacts specifically with the aryl carrier protein (ArCP) domain of EntB.

It localises to the cytoplasm. It functions in the pathway siderophore biosynthesis; enterobactin biosynthesis. Required for optimal enterobactin synthesis. Acts as a proofreading enzyme that prevents EntB misacylation by hydrolyzing the thioester bound existing between EntB and wrongly charged molecules. This chain is Proofreading thioesterase EntH, found in Salmonella arizonae (strain ATCC BAA-731 / CDC346-86 / RSK2980).